A 175-amino-acid polypeptide reads, in one-letter code: Gamma-crystallin B (175 aa).

Beta/gamma crystallin 'Greek key' domains follow at residues 2–40 (GKIT…RVDS) and 41–83 (GCWM…CLIP). The connecting peptide stretch occupies residues 84–88 (QHSGT). Beta/gamma crystallin 'Greek key' domains are found at residues 89–129 (YRMR…NVME) and 130–172 (GCWV…RRVM).

It belongs to the beta/gamma-crystallin family.

In terms of biological role, crystallins are the dominant structural components of the vertebrate eye lens. This is Gamma-crystallin B (Crygb) from Mus musculus (Mouse).